The primary structure comprises 1014 residues: Klotho (1014 aa).

The first 34 residues, 1 to 34 (MLARAPPRRPPRLVLLRLLLLHLLLLALRARCLS), serve as a signal peptide directing secretion. At 35–982 (AEPGQGAQTW…TECGFFQTRK (948 aa)) the chain is on the extracellular side. Glycosyl hydrolase-1 stretches follow at residues 59–508 (LHDT…DNGF) and 517–955 (LEGT…SNGF). N-linked (GlcNAc...) asparagine glycans are attached at residues Asn-161, Asn-285, Asn-346, Asn-609, Asn-614, and Asn-696. The helical transmembrane segment at 983–1003 (SLLVFISFLVFTFIISLALIF) threads the bilayer. Topologically, residues 1004-1014 (HYSKKGQRSYK) are cytoplasmic.

It belongs to the glycosyl hydrolase 1 family. Klotho subfamily. As to quaternary structure, homodimer. Interacts with FGF23 and FGFR1. In terms of processing, N-glycosylated. In terms of tissue distribution, membrane-bound protein is present in distal renal tubules, inner ear, ependymal cells of brain choroid plexus, elongating spermatids and mature oocytes (at protein level). Soluble peptide is present in serum (100 pM) and cerebrospinal fluid. Expressed strongly in kidney, moderately in brain choroid plexus, and at low levels in pituitary, placenta, skeletal muscle, urinary bladder, aorta, pancreas, testis, ovary, colon, thyroid gland and adipocytes.

It is found in the cell membrane. The protein localises to the apical cell membrane. The protein resides in the secreted. It catalyses the reaction a beta-D-glucuronoside + H2O = D-glucuronate + an alcohol. With respect to regulation, inhibited by D-saccharic acid 1,4-lactone and taurocholic acid. May have weak glycosidase activity towards glucuronylated steroids. However, it lacks essential active site Glu residues at positions 241 and 874, suggesting it may be inactive as a glycosidase in vivo. May be involved in the regulation of calcium and phosphorus homeostasis by inhibiting the synthesis of active vitamin D. Essential factor for the specific interaction between FGF23 and FGFR1. Functionally, the Klotho peptide generated by cleavage of the membrane-bound isoform may be an anti-aging circulating hormone which would extend life span by inhibiting insulin/IGF1 signaling. This chain is Klotho (Kl), found in Mus musculus (Mouse).